The following is a 612-amino-acid chain: Cytoplasmic dynein 1 intermediate chain 2 (612 aa).

2 stretches are compositionally biased toward basic and acidic residues: residues 1–13 (MSDK…ELER) and 20–43 (QIRE…KKEA). 2 disordered regions span residues 1–117 (MSDK…MAKI) and 129–188 (TYTK…EEKQ). S2 carries the N-acetylserine modification. S51 bears the Diphosphoserine mark. S51 and S84 each carry phosphoserine. The segment covering 82-91 (PSSKSVSTPS) has biased composition (low complexity). T89 carries the post-translational modification Phosphothreonine. Phosphoserine is present on residues S91, S95, and S98. Residues 164–188 (EKTLKKDEESDSKAPPHELTEEEKQ) show a composition bias toward basic and acidic residues. 7 WD repeats span residues 251-300 (SKHR…TTPE), 304-344 (HCQS…RTPV), 353-394 (AHTH…HPQD), 403-443 (SKAV…AGIS), 448-493 (GHQG…PLYS), 496-536 (DNSD…EVPT), and 542-581 (EGNP…AVPR).

The protein belongs to the dynein intermediate chain family. Homodimer. The cytoplasmic dynein 1 complex consists of two catalytic heavy chains (HCs) and a number of non-catalytic subunits presented by intermediate chains (ICs), light intermediate chains (LICs) and light chains (LCs); the composition seems to vary in respect to the IC, LIC and LC composition. The heavy chain homodimer serves as a scaffold for the probable homodimeric assembly of the respective non-catalytic subunits. The ICs and LICs bind directly to the HC dimer and the LCs assemble on the IC dimer. Interacts with DYNLT3. Interacts with DYNLT1. Interacts (dephosphorylated at Ser-84) with DCTN1. Interacts with BICD2. Interacts with SPEF2. Interacts with CFAP61. In terms of processing, the phosphorylation status of Ser-84 appears to be involved in dynactin-dependent target binding. Pyrophosphorylation by 5-diphosphoinositol pentakisphosphate (5-IP7) promotes interaction with DCTN1. Serine pyrophosphorylation is achieved by Mg(2+)-dependent, but enzyme independent transfer of a beta-phosphate from a inositol pyrophosphate to a pre-phosphorylated serine residue.

It is found in the cytoplasm. It localises to the cytoskeleton. Functionally, acts as one of several non-catalytic accessory components of the cytoplasmic dynein 1 complex that are thought to be involved in linking dynein to cargos and to adapter proteins that regulate dynein function. Cytoplasmic dynein 1 acts as a motor for the intracellular retrograde motility of vesicles and organelles along microtubules. The intermediate chains mediate the binding of dynein to dynactin via its 150 kDa component (p150-glued) DCTN1. Involved in membrane-transport, such as Golgi apparatus, late endosomes and lysosomes. The sequence is that of Cytoplasmic dynein 1 intermediate chain 2 (DYNC1I2) from Bos taurus (Bovine).